The primary structure comprises 479 residues: MFS-type transporter lnaF (479 aa).

11 helical membrane-spanning segments follow: residues W47 to P67, G71 to I91, L104 to I124, W136 to L156, L177 to G197, I208 to W228, I250 to F270, L283 to V303, I306 to L326, I344 to V364, and L372 to A392. N416 is a glycosylation site (N-linked (GlcNAc...) asparagine). The chain crosses the membrane as a helical span at residues L442 to A462.

Belongs to the major facilitator superfamily. TCR/Tet family.

The protein localises to the cell membrane. In terms of biological role, MFS-type transporter; part of the lnb gene cluster that mediates the biosynthesis of diastereomeric piperazines. Lna and lnb clusters encode sets of enzymes that produce overlapping sets of previously undescribed metabolites such as piperazinomycin-like metabolites or morpholine. The lna and lnb biosynthetic pathways appear to be part of a signaling network that controls the formation of sclerotia, a resilient overwintering structure. May be involved in the secretion of the metabolites produced by the lna and lnb clusters. In Aspergillus flavus (strain ATCC 200026 / FGSC A1120 / IAM 13836 / NRRL 3357 / JCM 12722 / SRRC 167), this protein is MFS-type transporter lnaF.